We begin with the raw amino-acid sequence, 432 residues long: 3-phosphoshikimate 1-carboxyvinyltransferase (432 aa).

3-phosphoshikimate is bound by residues K22, S23, and R27. K22 contributes to the phosphoenolpyruvate binding site. G96 and R127 together coordinate phosphoenolpyruvate. 3-phosphoshikimate contacts are provided by S173, S174, Q175, S201, D316, N339, and K343. Phosphoenolpyruvate is bound at residue Q175. Residue D316 is the Proton acceptor of the active site. Residues R347, R391, and K416 each coordinate phosphoenolpyruvate.

Belongs to the EPSP synthase family. In terms of assembly, monomer.

The protein localises to the cytoplasm. It carries out the reaction 3-phosphoshikimate + phosphoenolpyruvate = 5-O-(1-carboxyvinyl)-3-phosphoshikimate + phosphate. It functions in the pathway metabolic intermediate biosynthesis; chorismate biosynthesis; chorismate from D-erythrose 4-phosphate and phosphoenolpyruvate: step 6/7. Functionally, catalyzes the transfer of the enolpyruvyl moiety of phosphoenolpyruvate (PEP) to the 5-hydroxyl of shikimate-3-phosphate (S3P) to produce enolpyruvyl shikimate-3-phosphate and inorganic phosphate. The polypeptide is 3-phosphoshikimate 1-carboxyvinyltransferase (Histophilus somni (Haemophilus somnus)).